Reading from the N-terminus, the 128-residue chain is Con-Ins F2b (128 aa).

A signal peptide spans 1 to 24 (MTTSSYFLLVALGLLLYVCRSSFG). 4 disulfide bridges follow: C29-C104, C41-C107, C53-C120, and C106-C111. Residues 59–89 (LQGGTGKKRGRASLLRKRRAFLSMLKARAKR) constitute a propeptide, c peptide. E115 is subject to 4-carboxyglutamate; partial. S127 carries the post-translational modification Serine amide.

The protein belongs to the insulin family. As to quaternary structure, heterodimer of A and B chains; disulfide-linked. In terms of tissue distribution, expressed by the venom gland.

The protein localises to the secreted. Functionally, this venom insulin facilitates prey capture by rapidly inducing hypoglycemic shock. Intraperitoneal injection of this peptide into zebrafish lowers blood glucose with the same potency than human insulin. In vivo, when applied to water, this peptide reduces overall locomotor activity of zebrafish larvae, observed as a significant decrease in the percentage of time spent swimming and movement frequency. In Conus floridulus (Cone snail), this protein is Con-Ins F2b.